The sequence spans 67 residues: MGEISITKLLVVAALVVLLFGTKKLRTLGGDLGAAIKGFKKAMNDDDAAAKKGADVDLQAEKLSHKE.

A helical membrane pass occupies residues 4–21 (ISITKLLVVAALVVLLFG).

It belongs to the TatA/E family. TatE subfamily.

It is found in the cell inner membrane. Functionally, part of the twin-arginine translocation (Tat) system that transports large folded proteins containing a characteristic twin-arginine motif in their signal peptide across membranes. TatE shares overlapping functions with TatA. This chain is Probable Sec-independent protein translocase protein TatE, found in Shigella flexneri.